The chain runs to 71 residues: Small ribosomal subunit protein bS18 (71 aa).

It belongs to the bacterial ribosomal protein bS18 family. In terms of assembly, part of the 30S ribosomal subunit. Forms a tight heterodimer with protein bS6.

Binds as a heterodimer with protein bS6 to the central domain of the 16S rRNA, where it helps stabilize the platform of the 30S subunit. In Nostoc sp. (strain PCC 7120 / SAG 25.82 / UTEX 2576), this protein is Small ribosomal subunit protein bS18.